We begin with the raw amino-acid sequence, 303 residues long: Phytochrome-associated serine/threonine-protein phosphatase 3 (303 aa).

Zn(2+) contacts are provided by D50, H52, D78, and N110. H111 serves as the catalytic Proton donor. Zn(2+) contacts are provided by H160 and H234.

This sequence belongs to the PPP phosphatase family. PP-6 (PP-V) subfamily. Interacts with PHYA and PHYB, mostly when they are phosphorylated and in Pfr forms. Interacts with TAP46. Interacts with NRP. Interacts with PIN1 and PIN2. Interacts with ABI5. Interacts with PIF3 and PIF4. Protein phosphatase 6 (PP6) holoenzyme is a heterotrimeric complex formed by the catalytic subunit FYPP, a SAPS domain-containing subunit (SAL) and a protein phosphatase 2A regulatory subunit A (PP2AA). Zn(2+) serves as cofactor. As to expression, mostly expressed in flowers. Also detected to a lower extent in stems and leaves. Expressed in roots.

The protein resides in the cytoplasm. The enzyme catalyses O-phospho-L-seryl-[protein] + H2O = L-seryl-[protein] + phosphate. It carries out the reaction O-phospho-L-threonyl-[protein] + H2O = L-threonyl-[protein] + phosphate. Catalytic subunit of protein phosphatase 6 (PP6). Dephosphorylates phosphorylated phytochromes, with a preference toward Pfr forms. Plays a major role in the photoperiodic control of flowering time in long days by modulating phytochrome signals in flowering time control. Involved in the regulation of polar auxin transport in roots. Dephosphorylates directly the auxin efflux carriers PIN1 and PIN2, thus promoting their proper polar localization in root cell plasma membrane. Acts antagonistically with the protein kinase PID to regulate the reversible phosphorylation of PIN and polar targeting, subsequently impacting polar auxin transport and plant development. Involved in the regulation of abscisic acid (ABA) signaling during seed germination and postgermination seedling growth. Functions as a negative regulator of ABA signaling through direct dephosphorylation and destabilization of ABI5 protein. Acts antagonistically with the protein kinase SRK2E/SNRK2.6 to regulate ABI5 phosphorylation and ABA responses. Involved in the regulation of phosphorylation status in hypocotyl phototropism. Involved in the negative regulation of photomorphogenesis by controlling the stability and transcriptional activity of PIF3 and PIF4 proteins in the dark, via the regulation of their phosphorylation status. This is Phytochrome-associated serine/threonine-protein phosphatase 3 from Arabidopsis thaliana (Mouse-ear cress).